The chain runs to 132 residues: Small ribosomal subunit protein uS8 (132 aa).

It belongs to the universal ribosomal protein uS8 family. As to quaternary structure, part of the 30S ribosomal subunit. Contacts proteins S5 and S12.

Its function is as follows. One of the primary rRNA binding proteins, it binds directly to 16S rRNA central domain where it helps coordinate assembly of the platform of the 30S subunit. The polypeptide is Small ribosomal subunit protein uS8 (Xylella fastidiosa (strain M12)).